The primary structure comprises 439 residues: uncharacterized protein (439 aa).

The TRAM domain maps to 1-55 (MLEQVRIQKMVNGGYGLAHLSNGKVVLVEGAYPGEEVLIKTYREKRDFSFGKVVS). Residues Cys-68, Cys-74, Cys-77, and Cys-149 each coordinate [4Fe-4S] cluster. S-adenosyl-L-methionine-binding residues include Gln-272, Tyr-301, Glu-322, and Asp-367. Residue Cys-394 is the Nucleophile of the active site.

It belongs to the class I-like SAM-binding methyltransferase superfamily. RNA M5U methyltransferase family.

This is an uncharacterized protein from Thermotoga maritima (strain ATCC 43589 / DSM 3109 / JCM 10099 / NBRC 100826 / MSB8).